The chain runs to 261 residues: MIIADNIKQFHSIRNSLIKQQKIGFVPTMGALHNGHISLIKKAKSENDVVIVSIFVNPTQFNNPNDYQTYPNQLQQDIQILASLDVDVLFNPSEKDIYPDGNLLRIEPKLEIANILEGKSRPGHFSGMLTVVLKLLQITKPNNLYLGEKDYQQVMLIKQLVKDFFINTKIIVCPTQRQPSGLPLSSRNKNLTSTDIEIANKIYEILRQDDFSNLEELTNKINSTGAKLQYIQKLNNRIFLAFYIGKVRLIDNFLKETGPSC.

ATP is bound at residue 29–36; the sequence is MGALHNGH. The Proton donor role is filled by His36. Position 60 (Gln60) interacts with (R)-pantoate. Gln60 serves as a coordination point for beta-alanine. Position 147-150 (147-150) interacts with ATP; that stretch reads GEKD. Residue Gln153 participates in (R)-pantoate binding. 184–187 is an ATP binding site; that stretch reads LSSR.

It belongs to the pantothenate synthetase family. As to quaternary structure, homodimer.

The protein localises to the cytoplasm. The enzyme catalyses (R)-pantoate + beta-alanine + ATP = (R)-pantothenate + AMP + diphosphate + H(+). Its pathway is cofactor biosynthesis; (R)-pantothenate biosynthesis; (R)-pantothenate from (R)-pantoate and beta-alanine: step 1/1. Functionally, catalyzes the condensation of pantoate with beta-alanine in an ATP-dependent reaction via a pantoyl-adenylate intermediate. The protein is Pantothenate synthetase of Francisella tularensis subsp. tularensis (strain FSC 198).